The chain runs to 188 residues: Elongation factor P (188 aa).

Belongs to the elongation factor P family.

It is found in the cytoplasm. It functions in the pathway protein biosynthesis; polypeptide chain elongation. Functionally, involved in peptide bond synthesis. Stimulates efficient translation and peptide-bond synthesis on native or reconstituted 70S ribosomes in vitro. Probably functions indirectly by altering the affinity of the ribosome for aminoacyl-tRNA, thus increasing their reactivity as acceptors for peptidyl transferase. The chain is Elongation factor P from Bifidobacterium longum (strain DJO10A).